The chain runs to 445 residues: Aminopeptidase S (445 aa).

An N-terminal signal peptide occupies residues 1 to 45 (MRPNRFSLRRSPTAVAAVALAAVLAAGAPAAQAAGAAAPTAAAAA). 2 residues coordinate Ca(2+): D48 and I49. Residues H130 and D142 each coordinate Zn(2+). E176 functions as the Proton acceptor in the catalytic mechanism. Residues E177, D205, and H292 each coordinate Zn(2+). The cysteines at positions 290 and 295 are disulfide-linked. Ca(2+)-binding residues include D307 and D311. The 121-residue stretch at 325-445 (GEPPTGEGVF…GYIDSWKLTF (121 aa)) folds into the P/Homo B domain. A propeptide spans 330-445 (GEGVFSNTTD…GYIDSWKLTF (116 aa)) (removed in mature form).

The protein belongs to the peptidase M28 family. M28A subfamily. Monomer. It depends on Ca(2+) as a cofactor. Zn(2+) is required as a cofactor. Requires Mn(2+) as cofactor. The cofactor is Co(2+).

The protein resides in the secreted. The enzyme catalyses Release of an N-terminal amino acid with a preference for large hydrophobic amino-terminus residues.. Its activity is regulated as follows. Calcium activates the enzyme, inhibited by 1,10-phenanthroline, EDTA and EGTA. End-product inhibited by L-amino acids. Non-competitively inhibited by NaF and NaH(2)PO(4). Its function is as follows. An exopeptidase specific for larger hydrophobic amino acids (especially leucine), no cleavage occurs if the next residue is proline. This is Aminopeptidase S from Streptomyces griseus subsp. griseus (strain JCM 4626 / CBS 651.72 / NBRC 13350 / KCC S-0626 / ISP 5235).